The primary structure comprises 318 residues: Malate dehydrogenase (318 aa).

NAD(+)-binding positions include 10-15 (GGGQIG) and Asp34. The substrate site is built by Arg83 and Arg89. Residues Asn96 and 119–121 (ISN) contribute to the NAD(+) site. The substrate site is built by Asn121 and Arg152. His176 functions as the Proton acceptor in the catalytic mechanism.

It belongs to the LDH/MDH superfamily. MDH type 3 family.

The catalysed reaction is (S)-malate + NAD(+) = oxaloacetate + NADH + H(+). In terms of biological role, catalyzes the reversible oxidation of malate to oxaloacetate. This is Malate dehydrogenase from Geotalea daltonii (strain DSM 22248 / JCM 15807 / FRC-32) (Geobacter daltonii).